The primary structure comprises 86 residues: U13-theraphotoxin-Cg1b (86 aa).

The signal sequence occupies residues 1–21 (MKVSVLITLAVLGVMFVWASA). Positions 22 to 51 (AELEQSGSDQKDSPAWLKSMERIFQSEERE) are excised as a propeptide. Disulfide bonds link C52/C66, C59/C71, and C65/C78.

Belongs to the neurotoxin 10 (Hwtx-1) family. 41 (Jztx-36) subfamily. As to expression, expressed by the venom gland.

Its subcellular location is the secreted. Its function is as follows. Probable ion channel inhibitor. The sequence is that of U13-theraphotoxin-Cg1b from Chilobrachys guangxiensis (Chinese earth tiger tarantula).